We begin with the raw amino-acid sequence, 454 residues long: Rhizobactin siderophore biosynthesis protein RhbE (454 aa).

7–13 (AGIGIGP) contacts FAD.

Belongs to the lysine N(6)-hydroxylase/L-ornithine N(5)-oxygenase family. FAD is required as a cofactor.

Its pathway is siderophore biosynthesis; rhizobactin biosynthesis. The protein is Rhizobactin siderophore biosynthesis protein RhbE (rhbE) of Rhizobium meliloti (strain 1021) (Ensifer meliloti).